Consider the following 236-residue polypeptide: Lipoprotein signal peptidase (236 aa).

4 helical membrane passes run 8-28 (FYGIALLAVVIDQVLKLWVYF), 44-64 (WFKLFYTLNPGMAFGIQFGFT), 68-88 (VLLTIIRIIATSMIIKYIWNL), and 98-118 (LLWGWSLILGGAAGNGIDSIF). Residues Asp-141 and Asp-174 contribute to the active site. Residues 166–186 (CLPVFNLADVAILAGVALIVL) traverse the membrane as a helical segment.

This sequence belongs to the peptidase A8 family.

The protein resides in the cell inner membrane. It carries out the reaction Release of signal peptides from bacterial membrane prolipoproteins. Hydrolyzes -Xaa-Yaa-Zaa-|-(S,diacylglyceryl)Cys-, in which Xaa is hydrophobic (preferably Leu), and Yaa (Ala or Ser) and Zaa (Gly or Ala) have small, neutral side chains.. It participates in protein modification; lipoprotein biosynthesis (signal peptide cleavage). Functionally, this protein specifically catalyzes the removal of signal peptides from prolipoproteins. The chain is Lipoprotein signal peptidase from Amoebophilus asiaticus (strain 5a2).